The following is a 128-amino-acid chain: Ribonuclease P protein component (128 aa).

The protein belongs to the RnpA family. Consists of a catalytic RNA component (M1 or rnpB) and a protein subunit.

The catalysed reaction is Endonucleolytic cleavage of RNA, removing 5'-extranucleotides from tRNA precursor.. Functionally, RNaseP catalyzes the removal of the 5'-leader sequence from pre-tRNA to produce the mature 5'-terminus. It can also cleave other RNA substrates such as 4.5S RNA. The protein component plays an auxiliary but essential role in vivo by binding to the 5'-leader sequence and broadening the substrate specificity of the ribozyme. The chain is Ribonuclease P protein component from Synechococcus sp. (strain CC9902).